The chain runs to 92 residues: Small ribosomal subunit protein uS19 (92 aa).

Belongs to the universal ribosomal protein uS19 family.

Protein S19 forms a complex with S13 that binds strongly to the 16S ribosomal RNA. This is Small ribosomal subunit protein uS19 from Gloeobacter violaceus (strain ATCC 29082 / PCC 7421).